The following is a 312-amino-acid chain: Glyoxylate/hydroxypyruvate reductase A (312 aa).

Arg-227 is a catalytic residue. The active-site Proton donor is the His-275.

This sequence belongs to the D-isomer specific 2-hydroxyacid dehydrogenase family. GhrA subfamily.

It localises to the cytoplasm. It catalyses the reaction glycolate + NADP(+) = glyoxylate + NADPH + H(+). The catalysed reaction is (R)-glycerate + NAD(+) = 3-hydroxypyruvate + NADH + H(+). The enzyme catalyses (R)-glycerate + NADP(+) = 3-hydroxypyruvate + NADPH + H(+). Catalyzes the NADPH-dependent reduction of glyoxylate and hydroxypyruvate into glycolate and glycerate, respectively. The sequence is that of Glyoxylate/hydroxypyruvate reductase A from Klebsiella pneumoniae (strain 342).